The primary structure comprises 315 residues: Tetratricopeptide repeat protein 23-like (315 aa).

The segment at 28–56 is disordered; it reads KIPEHQRTDESSPTSGSEESEEDTKAKEK. Coiled coils occupy residues 65 to 90, 179 to 200, and 250 to 280; these read REKLAQSQKKIAQLIKGKKNIEANKE, REAYFNLQKSERNMKELRESYK, and SELVSLYQEIAQIEQLRRNHEQAIQYLHQAH.

It localises to the cytoplasm. Its subcellular location is the cytoskeleton. The protein localises to the microtubule organizing center. The protein resides in the centrosome. It is found in the spindle. It localises to the midbody. This Bos taurus (Bovine) protein is Tetratricopeptide repeat protein 23-like (TTC23L).